Here is a 473-residue protein sequence, read N- to C-terminus: MTTTGSTPPRKNRSNVTGGEGGSLEEYAWRAAGEAAAAKKATRAWGVSVSLRSHFSSLVLLLLLLLVALAVSATTKNGDPAETPHAPPLPPPASIKLPSSSSSGGGECDLFSGRWVYDEAAYPLYRESACRVMSEQSACEKYGRTDLRYQHWRWQPHGCDLPRFDAEKFLGKLRNKRLVFVGDSLNRNQWASMLCLIDTGAPELHTSINSSRSLTTFKIHEYNASVDFYWSPLLVESNSDHPLRHRVADRTVRAASINKHAAHWTNADVLVFNSYLWWQRPAMKVLWGSFDNPAAVVAAAAEEGDEYAVSKVIDSLRAYELAVRTWADWMEFHVDRARTQLFFMTMSPTHLRSDEWEDAAAAAAGGNHGCYGETEPIAAEEYRGTSGTDMAFARAVEAEARRLGERSVAVRLINVTRLSERRKDAHPSVHRRYWDPVTDEQRRNPSSYADCIHWCLPGVPDVWNQLLYAHIVS.

The span at 1 to 17 (MTTTGSTPPRKNRSNVT) shows a compositional bias: polar residues. The interval 1-22 (MTTTGSTPPRKNRSNVTGGEGG) is disordered. The Cytoplasmic segment spans residues 1–54 (MTTTGSTPPRKNRSNVTGGEGGSLEEYAWRAAGEAAAAKKATRAWGVSVSLRSH). The helical; Signal-anchor for type II membrane protein transmembrane segment at 55–75 (FSSLVLLLLLLLVALAVSATT) threads the bilayer. The disordered stretch occupies residues 76 to 101 (KNGDPAETPHAPPLPPPASIKLPSSS). The Lumenal segment spans residues 76 to 473 (KNGDPAETPH…NQLLYAHIVS (398 aa)). 4 cysteine pairs are disulfide-bonded: cysteine 108–cysteine 159, cysteine 130–cysteine 195, cysteine 139–cysteine 455, and cysteine 370–cysteine 451. The short motif at 182-184 (GDS) is the GDS motif element. The active-site Nucleophile is the serine 184. N-linked (GlcNAc...) asparagine glycans are attached at residues asparagine 209, asparagine 223, and asparagine 414. Aspartate 450 (proton donor) is an active-site residue. A DXXH motif motif is present at residues 450-453 (DCIH). Residue histidine 453 is the Proton acceptor of the active site.

It belongs to the PC-esterase family. TBL subfamily.

It localises to the golgi apparatus membrane. In terms of biological role, xylan acetyltransferase required for 2-O- and 3-O-monoacetylation of xylosyl residues in xylan. Catalyzes the 2-O-acetylation of xylan, followed by nonenzymatic acetyl migration to the O-3 position, resulting in products that are monoacetylated at both O-2 and O-3 positions. In Oryza sativa subsp. japonica (Rice), this protein is Xylan O-acetyltransferase 14.